The sequence spans 221 residues: CASP-like protein 2U10 (221 aa).

Residues 1–22 are disordered; it reads MDSSSKPMNGSAGGSPVGDERK. At 1–31 the chain is on the cytoplasmic side; the sequence is MDSSSKPMNGSAGGSPVGDERKMGDHEHEFR. A helical transmembrane segment spans residues 32-52; that stretch reads ISIILLRSFLLVLVIISEALM. The Extracellular segment spans residues 53–91; that stretch reads VTDRETGSVPLPFFGLPRPVFVTKTAKYELVTGLKFYVD. The chain crosses the membrane as a helical span at residues 92–112; sequence ALGVVIGYTVLHLLFNIGLVA. The Cytoplasmic segment spans residues 113–122; that stretch reads TKGTVVDCKS. The chain crosses the membrane as a helical span at residues 123 to 143; sequence VAWISFIADSMMGYLLLSSAA. Over 144-174 the chain is Extracellular; it reads VATEIGYLAEEGAPAVLWRKVCNAFGYFCTV. Residues 175 to 195 traverse the membrane as a helical segment; that stretch reads YAISVVICFIAALVSFVVVGI. At 196–221 the chain is on the cytoplasmic side; sequence SAYHLFRLYGIQQQAAREKEKLSAEM.

Belongs to the Casparian strip membrane proteins (CASP) family. In terms of assembly, homodimer and heterodimers.

It is found in the cell membrane. The sequence is that of CASP-like protein 2U10 from Selaginella moellendorffii (Spikemoss).